A 396-amino-acid chain; its full sequence is Lipid-A-disaccharide synthase (396 aa).

The protein belongs to the LpxB family.

It catalyses the reaction a lipid X + a UDP-2-N,3-O-bis[(3R)-3-hydroxyacyl]-alpha-D-glucosamine = a lipid A disaccharide + UDP + H(+). The protein operates within bacterial outer membrane biogenesis; LPS lipid A biosynthesis. Its function is as follows. Condensation of UDP-2,3-diacylglucosamine and 2,3-diacylglucosamine-1-phosphate to form lipid A disaccharide, a precursor of lipid A, a phosphorylated glycolipid that anchors the lipopolysaccharide to the outer membrane of the cell. The sequence is that of Lipid-A-disaccharide synthase from Nitrobacter hamburgensis (strain DSM 10229 / NCIMB 13809 / X14).